Consider the following 338-residue polypeptide: Protein REG2 (338 aa).

A disordered region spans residues 1 to 21 (MTLSNCDSLDNLFQDPPEEEE).

Regulatory subunit, binds to type-1 protein phosphatase. Functions with HEX2/REG1 and SNF1 protein kinase to regulate growth. Might regulate SNF1 directly or indirectly. This chain is Protein REG2 (REG2), found in Saccharomyces cerevisiae (strain ATCC 204508 / S288c) (Baker's yeast).